The sequence spans 341 residues: NADH-ubiquinone oxidoreductase chain 1 (341 aa).

10 helical membrane-spanning segments follow: residues 2-22, 39-59, 71-91, 104-124, 141-161, 175-195, 212-230, 243-263, 276-296, and 308-328; these read IINIVEILIFLVCVLFSVAYL, PNFVGYYGLLQAFADAVKLLL, IILVISPLITLITALIGWVVI, LGILFSLAIGSLGVFGSLLSG, AQLISYELILTSIFIIIIMFV, VVWYCIPLLPLLLIFFIASVA, VAGYFTEYSGSPFVFFFLA, GYLLLGGYLSFNYSYLFNILF, LINSSAYAIKLVFLMFSFIWV, and LINFCWIILLPLLFGIFLIIP.

It belongs to the complex I subunit 1 family. In terms of assembly, complex I is composed of 37 different subunits.

It is found in the mitochondrion inner membrane. The enzyme catalyses a ubiquinone + NADH + 5 H(+)(in) = a ubiquinol + NAD(+) + 4 H(+)(out). Its function is as follows. Core subunit of the mitochondrial membrane respiratory chain NADH dehydrogenase (Complex I) that is believed to belong to the minimal assembly required for catalysis. Complex I functions in the transfer of electrons from NADH to the respiratory chain. The immediate electron acceptor for the enzyme is believed to be ubiquinone. This chain is NADH-ubiquinone oxidoreductase chain 1 (ND1), found in Yarrowia lipolytica (strain CLIB 122 / E 150) (Yeast).